The following is a 310-amino-acid chain: Aspartate carbamoyltransferase catalytic subunit (310 aa).

Positions 55 and 56 each coordinate carbamoyl phosphate. Lysine 85 serves as a coordination point for L-aspartate. Arginine 106, histidine 135, and glutamine 138 together coordinate carbamoyl phosphate. Residues arginine 168 and arginine 230 each contribute to the L-aspartate site. Carbamoyl phosphate is bound by residues leucine 268 and proline 269.

This sequence belongs to the aspartate/ornithine carbamoyltransferase superfamily. ATCase family. In terms of assembly, heterododecamer (2C3:3R2) of six catalytic PyrB chains organized as two trimers (C3), and six regulatory PyrI chains organized as three dimers (R2).

It carries out the reaction carbamoyl phosphate + L-aspartate = N-carbamoyl-L-aspartate + phosphate + H(+). The protein operates within pyrimidine metabolism; UMP biosynthesis via de novo pathway; (S)-dihydroorotate from bicarbonate: step 2/3. Its function is as follows. Catalyzes the condensation of carbamoyl phosphate and aspartate to form carbamoyl aspartate and inorganic phosphate, the committed step in the de novo pyrimidine nucleotide biosynthesis pathway. This chain is Aspartate carbamoyltransferase catalytic subunit, found in Buchnera aphidicola subsp. Acyrthosiphon pisum (strain APS) (Acyrthosiphon pisum symbiotic bacterium).